The primary structure comprises 227 residues: Cytochrome c oxidase subunit 2 (227 aa).

Residues 1 to 26 lie on the Mitochondrial intermembrane side of the membrane; sequence MATWSNFNLQNSASPLMEQIIFFHDH. A helical transmembrane segment spans residues 27–51; it reads TLVILIMITILVGYLMISLFFNSYI. Topologically, residues 52–62 are mitochondrial matrix; the sequence is NRFLLEGQMIE. The chain crosses the membrane as a helical span at residues 63 to 81; the sequence is LIWTILPAITLIFIALPSL. The Mitochondrial intermembrane segment spans residues 82 to 227; it reads RLLYLLDELN…NFINWINNYS (146 aa). H161, C196, E198, C200, H204, and M207 together coordinate Cu cation. E198 contacts Mg(2+).

This sequence belongs to the cytochrome c oxidase subunit 2 family. In terms of assembly, component of the cytochrome c oxidase (complex IV, CIV), a multisubunit enzyme composed of a catalytic core of 3 subunits and several supernumerary subunits. The complex exists as a monomer or a dimer and forms supercomplexes (SCs) in the inner mitochondrial membrane with ubiquinol-cytochrome c oxidoreductase (cytochrome b-c1 complex, complex III, CIII). Requires Cu cation as cofactor.

It is found in the mitochondrion inner membrane. It catalyses the reaction 4 Fe(II)-[cytochrome c] + O2 + 8 H(+)(in) = 4 Fe(III)-[cytochrome c] + 2 H2O + 4 H(+)(out). Component of the cytochrome c oxidase, the last enzyme in the mitochondrial electron transport chain which drives oxidative phosphorylation. The respiratory chain contains 3 multisubunit complexes succinate dehydrogenase (complex II, CII), ubiquinol-cytochrome c oxidoreductase (cytochrome b-c1 complex, complex III, CIII) and cytochrome c oxidase (complex IV, CIV), that cooperate to transfer electrons derived from NADH and succinate to molecular oxygen, creating an electrochemical gradient over the inner membrane that drives transmembrane transport and the ATP synthase. Cytochrome c oxidase is the component of the respiratory chain that catalyzes the reduction of oxygen to water. Electrons originating from reduced cytochrome c in the intermembrane space (IMS) are transferred via the dinuclear copper A center (CU(A)) of subunit 2 and heme A of subunit 1 to the active site in subunit 1, a binuclear center (BNC) formed by heme A3 and copper B (CU(B)). The BNC reduces molecular oxygen to 2 water molecules using 4 electrons from cytochrome c in the IMS and 4 protons from the mitochondrial matrix. The protein is Cytochrome c oxidase subunit 2 (COII) of Choristoneura fumiferana (Spruce budworm moth).